Consider the following 336-residue polypeptide: UPF0065 protein in tcbD-tcbE intergenic region (336 aa).

An N-terminal signal peptide occupies residues 1-32 (MHSSKCPDLANIGRRRVLAGIALAMTTSSTRA).

It belongs to the UPF0065 (bug) family.

The protein localises to the periplasm. The sequence is that of UPF0065 protein in tcbD-tcbE intergenic region from Pseudomonas sp. (strain P51).